A 97-amino-acid polypeptide reads, in one-letter code: Glutamyl-tRNA(Gln) amidotransferase subunit C 2 (97 aa).

The protein belongs to the GatC family. As to quaternary structure, heterotrimer of A, B and C subunits.

The catalysed reaction is L-glutamyl-tRNA(Gln) + L-glutamine + ATP + H2O = L-glutaminyl-tRNA(Gln) + L-glutamate + ADP + phosphate + H(+). The enzyme catalyses L-aspartyl-tRNA(Asn) + L-glutamine + ATP + H2O = L-asparaginyl-tRNA(Asn) + L-glutamate + ADP + phosphate + 2 H(+). Allows the formation of correctly charged Asn-tRNA(Asn) or Gln-tRNA(Gln) through the transamidation of misacylated Asp-tRNA(Asn) or Glu-tRNA(Gln) in organisms which lack either or both of asparaginyl-tRNA or glutaminyl-tRNA synthetases. The reaction takes place in the presence of glutamine and ATP through an activated phospho-Asp-tRNA(Asn) or phospho-Glu-tRNA(Gln). This is Glutamyl-tRNA(Gln) amidotransferase subunit C 2 (gatC2) from Clostridium acetobutylicum (strain ATCC 824 / DSM 792 / JCM 1419 / IAM 19013 / LMG 5710 / NBRC 13948 / NRRL B-527 / VKM B-1787 / 2291 / W).